Reading from the N-terminus, the 450-residue chain is Phosphoglucosamine mutase (450 aa).

Residue Ser-100 is the Phosphoserine intermediate of the active site. Mg(2+) is bound by residues Ser-100, Asp-240, Asp-242, and Asp-244. Phosphoserine is present on Ser-100.

The protein belongs to the phosphohexose mutase family. Mg(2+) serves as cofactor. Post-translationally, activated by phosphorylation.

The enzyme catalyses alpha-D-glucosamine 1-phosphate = D-glucosamine 6-phosphate. Its function is as follows. Catalyzes the conversion of glucosamine-6-phosphate to glucosamine-1-phosphate. This chain is Phosphoglucosamine mutase, found in Desulforudis audaxviator (strain MP104C).